The following is a 172-amino-acid chain: Adenylate kinase isoenzyme 6 (172 aa).

5 residues coordinate ATP: G13, G15, K16, T17, and T18. The interval 33-56 (NVGDLAREGELYDGFDEEYNCPIL) is NMPbind. The tract at residues 108 to 118 (TRGYSEKKLND) is LID. Residues R109 and K148 each contribute to the ATP site.

This sequence belongs to the adenylate kinase family. AK6 subfamily. As to quaternary structure, monomer and homodimer. Interacts with small ribosomal subunit protein uS11. Not a structural component of 43S pre-ribosomes, but transiently interacts with them by binding to uS11. Interacts with COIL (via C-terminus).

Its subcellular location is the cytoplasm. The protein localises to the nucleus. The protein resides in the nucleoplasm. It is found in the cajal body. It catalyses the reaction AMP + ATP = 2 ADP. The catalysed reaction is ATP + H2O = ADP + phosphate + H(+). Broad-specificity nucleoside monophosphate (NMP) kinase that catalyzes the reversible transfer of the terminal phosphate group between nucleoside triphosphates and monophosphates. Also has ATPase activity. Involved in the late cytoplasmic maturation steps of the 40S ribosomal particles, specifically 18S rRNA maturation. While NMP activity is not required for ribosome maturation, ATPase activity is. Associates transiently with small ribosomal subunit protein uS11. ATP hydrolysis breaks the interaction with uS11. May temporarily remove uS11 from the ribosome to enable a conformational change of the ribosomal RNA that is needed for the final maturation step of the small ribosomal subunit. Its NMP activity may have a role in nuclear energy homeostasis. May be involved in regulation of Cajal body (CB) formation. The polypeptide is Adenylate kinase isoenzyme 6 (Oryctolagus cuniculus (Rabbit)).